Reading from the N-terminus, the 368-residue chain is Probable deoxyhypusine synthase (368 aa).

Residues 100-104 (SNLVS), 126-128 (TAG), glutamate 132, and aspartate 233 each bind NAD(+). 131-132 (EE) lines the spermidine pocket. Residue aspartate 238 participates in spermidine binding. Glycine 278 serves as a coordination point for NAD(+). Position 283 (histidine 283) interacts with spermidine. 303 to 304 (TA) is an NAD(+) binding site. Residues 309-311 (GSD) and 318-324 (EAISWGK) contribute to the spermidine site. The Nucleophile role is filled by lysine 324. 337–338 (EA) is an NAD(+) binding site.

It belongs to the deoxyhypusine synthase family. The cofactor is NAD(+).

The enzyme catalyses [eIF5A protein]-L-lysine + spermidine = [eIF5A protein]-deoxyhypusine + propane-1,3-diamine. The protein operates within protein modification; eIF5A hypusination. In terms of biological role, catalyzes the NAD-dependent oxidative cleavage of spermidine and the subsequent transfer of the butylamine moiety of spermidine to the epsilon-amino group of a specific lysine residue of the eIF-5A precursor protein to form the intermediate deoxyhypusine residue. In Drosophila melanogaster (Fruit fly), this protein is Probable deoxyhypusine synthase.